The sequence spans 1257 residues: Phosphatidylinositol 3,4,5-trisphosphate 5-phosphatase 2 (1257 aa).

In terms of domain architecture, SH2 spans 21-117; the sequence is WYHRDLSRAA…GLVCALLLPV (97 aa). Basic and acidic residues predominate over residues 119–132; it reads GEREPDPPDDRDAS. A disordered region spans residues 119–181; that stretch reads GEREPDPPDD…ESTPNGLSTV (63 aa). Residue serine 132 is modified to Phosphoserine. Residues 156 to 166 show a composition bias toward pro residues; it reads PSSPLPTPETP. Threonine 165 is modified (phosphothreonine). A phosphoserine mark is found at serine 241 and serine 353. At tyrosine 887 the chain carries Phosphotyrosine. Serine 891 is subject to Phosphoserine. Residues 897–986 form a disordered region; sequence TGAKSKVPSV…PPKNSFNNPA (90 aa). The segment covering 939–951 has biased composition (pro residues); the sequence is PPPTGRPPAPPRA. The SH3-binding motif lies at 945-950; the sequence is PPAPPR. A compositionally biased stretch (basic and acidic residues) spans 952-966; sequence VPREEPLNPRLKSEG. The NPXY motif signature appears at 984 to 987; sequence NPAY. At tyrosine 987 the chain carries Phosphotyrosine. The span at 999-1008 shows a compositional bias: low complexity; the sequence is PLEPPSLARA. Positions 999-1119 are disordered; it reads PLEPPSLARA…FLGEVASGDD (121 aa). Pro residues-rich tracts occupy residues 1049 to 1060 and 1088 to 1104; these read LPPPDFPPPPLP and GPPP…PPGT. Serine 1132 carries the post-translational modification Phosphoserine. The disordered stretch occupies residues 1134 to 1196; that stretch reads VDYAPGPGRS…PQGGRASGLG (63 aa). 2 positions are modified to phosphotyrosine: tyrosine 1136 and tyrosine 1161. The region spanning 1195–1257 is the SAM domain; the sequence is LGEAGMGAWL…LLLDTLQLSK (63 aa). Serine 1256 bears the Phosphoserine mark.

It belongs to the inositol 1,4,5-trisphosphate 5-phosphatase family. Interacts with tyrosine phosphorylated form of SHC1. Interacts with EGFR. Upon stimulation by the EGF signaling pathway, it forms a complex with SHC1 and EGFR. Interacts with cytoskeletal protein SORBS3/vinexin, promoting its localization to the periphery of cells. Forms a complex with filamin (FLNA or FLNB), actin, GPIb (GP1BA or GP1BB) that regulates cortical and submembraneous actin. Interacts with c-Met/MET, when c-Met/MET is phosphorylated on 'Tyr-1356'. Interacts with p130Cas/BCAR1. Interacts with CENTD3/ARAP3 via its SAM domain. Interacts with c-Cbl/CBL and CAP/SORBS1. Interacts with activated EPHA2 receptor. Interacts with receptors FCGR2A. Interacts with FCGR2B. Interacts with tyrosine kinase ABL1. Interacts with tyrosine kinase TEC. Interacts with CSF1R. Interacts (via N-terminus) with SH3YL1 (via SH3 domain). Interacts (via SH2 domain) with tyrosine phosphorylated KLRC1 (via ITIM). Interacts with NEDD9/HEF1. Post-translationally, tyrosine phosphorylated by the members of the SRC family after exposure to a diverse array of extracellular stimuli such as insulin, growth factors such as EGF or PDGF, chemokines, integrin ligands and hypertonic and oxidative stress. May be phosphorylated upon IgG receptor FCGR2B-binding. Phosphorylated at Tyr-987 following cell attachment and spreading. Phosphorylated at Tyr-1161 following EGF signaling pathway stimulation. As to expression, widely expressed.

Its subcellular location is the cytoplasm. It localises to the cytosol. It is found in the cytoskeleton. The protein resides in the membrane. The protein localises to the cell projection. Its subcellular location is the filopodium. It localises to the lamellipodium. It is found in the basal cell membrane. The protein resides in the nucleus. The protein localises to the nucleus speckle. Its subcellular location is the spindle pole. It carries out the reaction a 1,2-diacyl-sn-glycero-3-phospho-(1D-myo-inositol-3,4,5-trisphosphate) + H2O = a 1,2-diacyl-sn-glycero-3-phospho-(1D-myo-inositol-3,4-bisphosphate) + phosphate. The enzyme catalyses 1,2-dioctanoyl-sn-glycero-3-phospho-(1D-myo-inositol-3,4,5-trisphosphate) + H2O = 1,2-dioctanoyl-sn-glycero-3-phospho-(1D-myo-inositol-3,4-bisphosphate) + phosphate. It catalyses the reaction 1,2-dihexadecanoyl-sn-glycero-3-phospho-(1D-myo-inositol-3,4,5-trisphosphate) + H2O = 1,2-dihexadecanoyl-sn-glycero-3-phospho-(1D-myo-inositol-3,4-bisphosphate) + phosphate. With respect to regulation, activated upon translocation to the sites of synthesis of PtdIns(3,4,5)P3 in the membrane. Enzymatic activity is enhanced in the presence of phosphatidylserine. In terms of biological role, phosphatidylinositol (PtdIns) phosphatase that specifically hydrolyzes the 5-phosphate of phosphatidylinositol-3,4,5-trisphosphate (PtdIns(3,4,5)P3) to produce PtdIns(3,4)P2, thereby negatively regulating the PI3K (phosphoinositide 3-kinase) pathways. Required for correct mitotic spindle orientation and therefore progression of mitosis. Plays a central role in regulation of PI3K-dependent insulin signaling, although the precise molecular mechanisms and signaling pathways remain unclear. While overexpression reduces both insulin-stimulated MAP kinase and Akt activation, its absence does not affect insulin signaling or GLUT4 trafficking. Confers resistance to dietary obesity. May act by regulating AKT2, but not AKT1, phosphorylation at the plasma membrane. Part of a signaling pathway that regulates actin cytoskeleton remodeling. Required for the maintenance and dynamic remodeling of actin structures as well as in endocytosis, having a major impact on ligand-induced EGFR internalization and degradation. Participates in regulation of cortical and submembraneous actin by hydrolyzing PtdIns(3,4,5)P3 thereby regulating membrane ruffling. Regulates cell adhesion and cell spreading. Required for HGF-mediated lamellipodium formation, cell scattering and spreading. Acts as a negative regulator of EPHA2 receptor endocytosis by inhibiting via PI3K-dependent Rac1 activation. Acts as a regulator of neuritogenesis by regulating PtdIns(3,4,5)P3 level and is required to form an initial protrusive pattern, and later, maintain proper neurite outgrowth. Acts as a negative regulator of the FC-gamma-RIIA receptor (FCGR2A). Mediates signaling from the FC-gamma-RIIB receptor (FCGR2B), playing a central role in terminating signal transduction from activating immune/hematopoietic cell receptor systems. Upon stimulation by EGF, it is recruited by EGFR and dephosphorylates PtdIns(3,4,5)P3. Plays a negative role in regulating the PI3K-PKB pathway, possibly by inhibiting PKB activity. Down-regulates Fc-gamma-R-mediated phagocytosis in macrophages independently of INPP5D/SHIP1. In macrophages, down-regulates NF-kappa-B-dependent gene transcription by regulating macrophage colony-stimulating factor (M-CSF)-induced signaling. Plays a role in the localization of AURKA and NEDD9/HEF1 to the basolateral membrane at interphase in polarized cysts, thereby mediates cell cycle homeostasis, cell polarization and cilia assembly. Additionally promotion of cilia growth is also facilitated by hydrolysis of (PtdIns(3,4,5)P3) to PtdIns(3,4)P2. Promotes formation of apical membrane-initiation sites during the initial stages of lumen formation via Rho family-induced actin filament organization and CTNNB1 localization to cell-cell contacts. May also hydrolyze PtdIns(1,3,4,5)P4, and could thus affect the levels of the higher inositol polyphosphates like InsP6. Involved in endochondral ossification. The polypeptide is Phosphatidylinositol 3,4,5-trisphosphate 5-phosphatase 2 (Mus musculus (Mouse)).